Reading from the N-terminus, the 757-residue chain is Lysyl oxidase homolog 4 (757 aa).

The signal sequence occupies residues 1–25; the sequence is MMWPQPPTFSLFLLLLLSQAPSSRP. SRCR domains lie at 33-134, 160-288, 312-412, and 422-530; these read LRLV…VVCH, VRLK…VSCV, VRLR…VRCN, and VRLA…VACM. Cystine bridges form between Cys-59–Cys-123, Cys-72–Cys-133, Cys-103–Cys-113, Cys-192–Cys-277, Cys-205–Cys-287, Cys-252–Cys-262, Cys-337–Cys-401, Cys-350–Cys-411, Cys-381–Cys-391, Cys-451–Cys-516, Cys-464–Cys-529, Cys-498–Cys-508, Cys-559–Cys-565, Cys-611–Cys-659, Cys-643–Cys-649, Cys-671–Cys-681, and Cys-718–Cys-732. Asn-199 is a glycosylation site (N-linked (GlcNAc...) asparagine). Positions 534-737 are lysyl-oxidase like; it reads PDLVMNAQLV…WLHNCHTGDS (204 aa). Cu cation-binding residues include His-612, His-614, and His-616. An N-linked (GlcNAc...) asparagine glycan is attached at Asn-630. A cross-link (lysine tyrosylquinone (Lys-Tyr)) is located at residues 639–675; sequence KASFCLEDTNCPSGVQRRYACANFGEQGVAVGCWDTY. At Tyr-675 the chain carries 2',4',5'-topaquinone.

Belongs to the lysyl oxidase family. Cu cation is required as a cofactor. Lysine tyrosylquinone residue serves as cofactor. In terms of processing, the lysine tyrosylquinone cross-link (LTQ) is generated by condensation of the epsilon-amino group of a lysine with a topaquinone produced by oxidation of tyrosine. May be proteolytically cleaved by BMP1.

It is found in the secreted. Its subcellular location is the extracellular space. It carries out the reaction L-lysyl-[protein] + O2 + H2O = (S)-2-amino-6-oxohexanoyl-[protein] + H2O2 + NH4(+). In terms of biological role, catalyzes the oxidative deamination of lysine and hydroxylysine residues in collagen and elastin, resulting in the formation of covalent cross-linkages, and the stabilization of collagen and elastin fibers. The protein is Lysyl oxidase homolog 4 (Loxl4) of Mus musculus (Mouse).